A 538-amino-acid chain; its full sequence is Glutamyl-tRNA(Gln) amidotransferase subunit B, mitochondrial (538 aa).

The protein belongs to the GatB/GatE family. GatB subfamily. In terms of assembly, subunit of the heterotrimeric GatCAB amidotransferase (AdT) complex, composed of A, B and C subunits.

It is found in the mitochondrion. It carries out the reaction L-glutamyl-tRNA(Gln) + L-glutamine + ATP + H2O = L-glutaminyl-tRNA(Gln) + L-glutamate + ADP + phosphate + H(+). In terms of biological role, allows the formation of correctly charged Gln-tRNA(Gln) through the transamidation of misacylated Glu-tRNA(Gln) in the mitochondria. The reaction takes place in the presence of glutamine and ATP through an activated gamma-phospho-Glu-tRNA(Gln). The polypeptide is Glutamyl-tRNA(Gln) amidotransferase subunit B, mitochondrial (Dictyostelium discoideum (Social amoeba)).